The sequence spans 78 residues: Beta-defensin 105A (78 aa).

The N-terminal stretch at 1–27 (MALIRKTFYFLFAVFFVLVQLPSECQA) is a signal peptide. 3 cysteine pairs are disulfide-bonded: Cys43–Cys74, Cys53–Cys67, and Cys57–Cys73.

It belongs to the beta-defensin family.

It localises to the secreted. Has antimicrobial activity. The polypeptide is Beta-defensin 105A (DEFB105A) (Pongo pygmaeus (Bornean orangutan)).